We begin with the raw amino-acid sequence, 343 residues long: Succinylglutamate desuccinylase (343 aa).

The Zn(2+) site is built by His60, Glu63, and His157. Glu221 is a catalytic residue.

The protein belongs to the AspA/AstE family. Succinylglutamate desuccinylase subfamily. Zn(2+) serves as cofactor.

It carries out the reaction N-succinyl-L-glutamate + H2O = L-glutamate + succinate. The protein operates within amino-acid degradation; L-arginine degradation via AST pathway; L-glutamate and succinate from L-arginine: step 5/5. Its function is as follows. Transforms N(2)-succinylglutamate into succinate and glutamate. In Idiomarina loihiensis (strain ATCC BAA-735 / DSM 15497 / L2-TR), this protein is Succinylglutamate desuccinylase.